A 631-amino-acid chain; its full sequence is NADPH oxidoreductase A (631 aa).

One can recognise a Flavodoxin-like domain in the interval 73–212 (ILILYGTEYG…CFDRYIDTVC (140 aa)). FMN contacts are provided by residues 79-83 (TEYGL) and 160-191 (VLALGDRSYPHYCAAGKTLDKQFEEMGAKRFR). Positions 247-480 (KKPYSSKLLV…INNNPDFRLP (234 aa)) constitute an FAD-binding FR-type domain. 249–299 (PYSSKLLVKRVLTKGDKVGIHLEFELGDSELKYVPGDALAILPDNAASEVS) is an FAD binding site. Residue 504 to 630 (QERKALGHTG…KEKRYQKDVW (127 aa)) coordinates NADP(+).

It depends on FAD as a cofactor. Requires FMN as cofactor.

Functionally, probable NADPH oxidoreductase that controls development beyond the mound stage. This is NADPH oxidoreductase A (redA) from Dictyostelium discoideum (Social amoeba).